The following is a 178-amino-acid chain: Large ribosomal subunit protein uL6 (178 aa).

This sequence belongs to the universal ribosomal protein uL6 family. Part of the 50S ribosomal subunit.

Functionally, this protein binds to the 23S rRNA, and is important in its secondary structure. It is located near the subunit interface in the base of the L7/L12 stalk, and near the tRNA binding site of the peptidyltransferase center. In Streptococcus thermophilus (strain CNRZ 1066), this protein is Large ribosomal subunit protein uL6.